The chain runs to 381 residues: Creatine kinase B-type (381 aa).

Ser4 carries the post-translational modification Phosphoserine. The Phosphagen kinase N-terminal domain maps to Lys11 to Gly98. Residue Thr35 is modified to Phosphothreonine. Residue Lys45 forms a Glycyl lysine isopeptide (Lys-Gly) (interchain with G-Cter in ubiquitin) linkage. Val72 contributes to the creatine binding site. The span at Arg96–Leu110 shows a compositional bias: basic and acidic residues. The interval Arg96–Pro123 is disordered. Residue Lys107 forms a Glycyl lysine isopeptide (Lys-Gly) (interchain with G-Cter in ubiquitin) linkage. A Phosphotyrosine modification is found at Tyr125. The Phosphagen kinase C-terminal domain maps to Tyr125 to Leu367. ATP is bound by residues Ser128–Arg132, Arg130, Arg132, and His191. The interval Arg130–Arg138 is internal MTS-like signal. A Phosphoserine modification is found at Ser199. Position 232 (Glu232) interacts with creatine. ATP is bound at residue Arg236. A 3'-nitrotyrosine modification is found at Tyr269. Ser285 is a creatine binding site. Position 292 (Arg292) interacts with ATP. A Phosphoserine modification is found at Ser309. Residues Arg320, Arg320 to Val325, and Asp335 each bind ATP. Residue Thr322 is modified to Phosphothreonine. Lys381 participates in a covalent cross-link: Glycyl lysine isopeptide (Lys-Gly) (interchain with G-Cter in ubiquitin).

It belongs to the ATP:guanido phosphotransferase family. Dimer of identical or non-identical chains, which can be either B (brain type) or M (muscle type). With MM being the major form in skeletal muscle and myocardium, MB existing in myocardium, and BB existing in many tissues, especially brain. Interacts with SLC12A6 (via C-terminus); the interaction may be required for SLC12A6 potassium-chloride cotransport activity. Post-translationally, ubiquitinated by the ECS(ASB9) complex, leading to its degradation by the proteasome. As to expression, expressed in hippocampus and corpus callosum (at protein level).

The protein localises to the cytoplasm. The protein resides in the cytosol. It localises to the mitochondrion. It is found in the cell membrane. It catalyses the reaction creatine + ATP = N-phosphocreatine + ADP + H(+). Functionally, reversibly catalyzes the transfer of phosphate between ATP and various phosphogens (e.g. creatine phosphate). Creatine kinase isoenzymes play a central role in energy transduction in tissues with large, fluctuating energy demands, such as skeletal muscle, heart, brain and spermatozoa. Acts as a key regulator of adaptive thermogenesis as part of the futile creatine cycle: localizes to the mitochondria of thermogenic fat cells and acts by mediating phosphorylation of creatine to initiate a futile cycle of creatine phosphorylation and dephosphorylation. During the futile creatine cycle, creatine and N-phosphocreatine are in a futile cycle, which dissipates the high energy charge of N-phosphocreatine as heat without performing any mechanical or chemical work. This Mus musculus (Mouse) protein is Creatine kinase B-type.